A 565-amino-acid polypeptide reads, in one-letter code: NAD-dependent malic enzyme (565 aa).

Tyrosine 104 functions as the Proton donor in the catalytic mechanism. Arginine 157 provides a ligand contact to NAD(+). Catalysis depends on lysine 175, which acts as the Proton acceptor. Residues glutamate 246, aspartate 247, and aspartate 270 each coordinate a divalent metal cation. Positions 270 and 418 each coordinate NAD(+).

This sequence belongs to the malic enzymes family. Homotetramer. Requires Mg(2+) as cofactor. Mn(2+) is required as a cofactor.

It catalyses the reaction (S)-malate + NAD(+) = pyruvate + CO2 + NADH. The catalysed reaction is oxaloacetate + H(+) = pyruvate + CO2. This chain is NAD-dependent malic enzyme, found in Enterobacter sp. (strain 638).